Consider the following 659-residue polypeptide: Putative pentatricopeptide repeat-containing protein At3g16890, mitochondrial (659 aa).

Residues 1–32 (MRGFASSASRIATAAAASKSLNASTSVNPKLS) constitute a mitochondrion transit peptide. 15 PPR repeats span residues 109–143 (DQSL…GYRI), 144–178 (SDEL…GMKP), 179–213 (STRL…GCKP), 214–248 (DRFT…GNRP), 249–283 (NVFT…KLNP), 284–318 (NEAT…DSNL), 319–353 (QRVG…GYIP), 354–388 (DSST…GVKP), 389–423 (GFNG…GLLS), 424–458 (SVYS…GISP), 459–493 (NLVT…GFKP), 494–528 (DVIT…GIEP), 529–563 (NEIT…GLSP), 564–598 (DLYA…GLKP), and 599–633 (DNFT…GCVP).

The protein belongs to the PPR family. P subfamily.

It is found in the mitochondrion. Functionally, required for the ubiquinol-cytochrome c oxidoreductase activity of mitochondrial complex III. This is Putative pentatricopeptide repeat-containing protein At3g16890, mitochondrial (PPR40) from Arabidopsis thaliana (Mouse-ear cress).